Reading from the N-terminus, the 199-residue chain is Chaperone protein TorD (199 aa).

This sequence belongs to the TorD/DmsD family. TorD subfamily.

It localises to the cytoplasm. Its function is as follows. Involved in the biogenesis of TorA. Acts on TorA before the insertion of the molybdenum cofactor and, as a result, probably favors a conformation of the apoenzyme that is competent for acquiring the cofactor. The chain is Chaperone protein TorD from Escherichia coli O45:K1 (strain S88 / ExPEC).